Consider the following 138-residue polypeptide: Cysteine desulfuration protein SufE (138 aa).

Cys-51 acts as the Cysteine persulfide intermediate in catalysis.

The protein belongs to the SufE family. In terms of assembly, homodimer. Interacts with SufS.

The protein localises to the cytoplasm. Its pathway is cofactor biosynthesis; iron-sulfur cluster biosynthesis. Its function is as follows. Participates in cysteine desulfuration mediated by SufS. Cysteine desulfuration mobilizes sulfur from L-cysteine to yield L-alanine and constitutes an essential step in sulfur metabolism for biosynthesis of a variety of sulfur-containing biomolecules. Functions as a sulfur acceptor for SufS, by mediating the direct transfer of the sulfur atom from the S-sulfanylcysteine of SufS, an intermediate product of cysteine desulfuration process. The protein is Cysteine desulfuration protein SufE of Cronobacter sakazakii (strain ATCC BAA-894) (Enterobacter sakazakii).